The following is a 365-amino-acid chain: Histidinol-phosphate aminotransferase (365 aa).

The interval 1-22 (MSRPVPNPGILDIAPYTPGKSP) is disordered. Residue Lys-221 is modified to N6-(pyridoxal phosphate)lysine.

It belongs to the class-II pyridoxal-phosphate-dependent aminotransferase family. Histidinol-phosphate aminotransferase subfamily. Homodimer. Requires pyridoxal 5'-phosphate as cofactor.

The enzyme catalyses L-histidinol phosphate + 2-oxoglutarate = 3-(imidazol-4-yl)-2-oxopropyl phosphate + L-glutamate. Its pathway is amino-acid biosynthesis; L-histidine biosynthesis; L-histidine from 5-phospho-alpha-D-ribose 1-diphosphate: step 7/9. In Nitrobacter winogradskyi (strain ATCC 25391 / DSM 10237 / CIP 104748 / NCIMB 11846 / Nb-255), this protein is Histidinol-phosphate aminotransferase.